The primary structure comprises 551 residues: MKANHIRILLLVTIAIMFISLMGKWEQTFPADNTKQQTSATQNNSHYDNADSSTNTDVTTTDAKSSLAKETNFSKYDNAKSITINTGVFKDVKVSLLDGAIISASLKDYSISLDDKTPMSLLTDKSGSEYIAKSTIVVNKQPISVNFEDQGIKIENGKQILTLTGSADGLQITRTYTFDDTKYNISVSQNIKNTTSAPVNVIVDDSFARGFDPAGDSFSLLNAHSYTFTGVAYSTAKDSFRKESFKDISKTNGQPTVINSDGQGWVAFLQHYFVSAWIPQSTNAKIYYKNLNGDVFEAGAFTGATIAPNQSENISSILYTGPIIKANLVDLAPNLEKTLDYGMLSFFSEIIFWVMNHIHSLVGNWGLAIILVTCLIKLIFYPLSAKSYRSMAKMRMLQPRIKRLQETYKDDRQALGKKMMELYKEEKVNPLSGCLPMLIQIPIFISLYWVLLESVELRQAPFIFWIHDLSMKDPYFVLPVLMGLSMFLQQKLSPAPADPMQAKVMMFLPVIFTFLFASFPSGLVLYWLTNNLISISQQWIITRHYQATHKK.

The helical transmembrane segment at 3–23 (ANHIRILLLVTIAIMFISLMG) threads the bilayer. The span at 33–47 (NTKQQTSATQNNSHY) shows a compositional bias: polar residues. The disordered stretch occupies residues 33–59 (NTKQQTSATQNNSHYDNADSSTNTDVT). A compositionally biased stretch (low complexity) spans 50–59 (ADSSTNTDVT). A run of 3 helical transmembrane segments spans residues 361 to 381 (LVGN…LIFY), 431 to 451 (LSGC…YWVL), and 504 to 524 (VMMF…SGLV).

This sequence belongs to the OXA1/ALB3/YidC family. Type 1 subfamily. In terms of assembly, interacts with the Sec translocase complex via SecD. Specifically interacts with transmembrane segments of nascent integral membrane proteins during membrane integration.

The protein resides in the cell inner membrane. In terms of biological role, required for the insertion and/or proper folding and/or complex formation of integral membrane proteins into the membrane. Involved in integration of membrane proteins that insert both dependently and independently of the Sec translocase complex, as well as at least some lipoproteins. Aids folding of multispanning membrane proteins. The protein is Membrane protein insertase YidC of Francisella tularensis subsp. mediasiatica (strain FSC147).